The chain runs to 173 residues: RNA pyrophosphohydrolase (173 aa).

The region spanning 6-149 (GFRANVGIII…KRDVYRKVMK (144 aa)) is the Nudix hydrolase domain. The Nudix box motif lies at 38 to 59 (GGVDEGESAEEAMYRELYEEVG).

The protein belongs to the Nudix hydrolase family. RppH subfamily. It depends on a divalent metal cation as a cofactor.

Accelerates the degradation of transcripts by removing pyrophosphate from the 5'-end of triphosphorylated RNA, leading to a more labile monophosphorylated state that can stimulate subsequent ribonuclease cleavage. In Shewanella piezotolerans (strain WP3 / JCM 13877), this protein is RNA pyrophosphohydrolase.